The following is a 736-amino-acid chain: Catalase-1 (736 aa).

The segment at 1–29 is disordered; that stretch reads MSNIISQAGQKAKEALTSAPSSKKVDDLK. Residue Arg-89 coordinates heme. Residue His-92 is part of the active site. Arg-129 is a binding site for heme. Asn-165 is an active-site residue. Phe-178, Arg-375, Tyr-379, and Arg-386 together coordinate heme. Positions 356 to 379 form a cross-link, 3-(S-cysteinyl)-tyrosine (Cys-Tyr); that stretch reads CTSHVVNGIGFSDDPLLQGRNFSY.

The protein belongs to the catalase family. Homotetramer. The cofactor is heme. In terms of processing, glycosylated; with alpha-glucose and/or alpha-mannose.

The protein resides in the secreted. The protein localises to the cell wall. The enzyme catalyses 2 H2O2 = O2 + 2 H2O. In terms of biological role, occurs in almost all aerobically respiring organisms and serves to protect cells from the toxic effects of hydrogen peroxide. This is Catalase-1 (cat-1) from Neurospora crassa (strain ATCC 24698 / 74-OR23-1A / CBS 708.71 / DSM 1257 / FGSC 987).